The chain runs to 166 residues: Regulatory protein RecX (166 aa).

It belongs to the RecX family.

The protein resides in the cytoplasm. Its function is as follows. Modulates RecA activity. In Klebsiella pneumoniae subsp. pneumoniae (strain ATCC 700721 / MGH 78578), this protein is Regulatory protein RecX.